The primary structure comprises 227 residues: Cytochrome c oxidase subunit 2 (227 aa).

Topologically, residues 1 to 14 (MANHSQLGFQDASS) are mitochondrial intermembrane. The helical transmembrane segment at 15–45 (PIMEELVEFHDHALMVALAICSLVLYLLTLM) threads the bilayer. Residues 46–58 (LMEKLSSNTVDAQ) lie on the Mitochondrial matrix side of the membrane. A helical transmembrane segment spans residues 59–86 (EVELIWTILPAIVLVLLALPSLQILYMM). The Mitochondrial intermembrane portion of the chain corresponds to 87-227 (DEIDEPDLTL…FEAWSSLLSS (141 aa)). Positions 160, 195, 197, 199, 203, and 206 each coordinate Cu cation. Glu197 contributes to the Mg(2+) binding site.

It belongs to the cytochrome c oxidase subunit 2 family. In terms of assembly, component of the cytochrome c oxidase (complex IV, CIV), a multisubunit enzyme composed of 14 subunits. The complex is composed of a catalytic core of 3 subunits MT-CO1, MT-CO2 and MT-CO3, encoded in the mitochondrial DNA, and 11 supernumerary subunits COX4I, COX5A, COX5B, COX6A, COX6B, COX6C, COX7A, COX7B, COX7C, COX8 and NDUFA4, which are encoded in the nuclear genome. The complex exists as a monomer or a dimer and forms supercomplexes (SCs) in the inner mitochondrial membrane with NADH-ubiquinone oxidoreductase (complex I, CI) and ubiquinol-cytochrome c oxidoreductase (cytochrome b-c1 complex, complex III, CIII), resulting in different assemblies (supercomplex SCI(1)III(2)IV(1) and megacomplex MCI(2)III(2)IV(2)). Found in a complex with TMEM177, COA6, COX18, COX20, SCO1 and SCO2. Interacts with TMEM177 in a COX20-dependent manner. Interacts with COX20. Interacts with COX16. Cu cation serves as cofactor.

Its subcellular location is the mitochondrion inner membrane. The enzyme catalyses 4 Fe(II)-[cytochrome c] + O2 + 8 H(+)(in) = 4 Fe(III)-[cytochrome c] + 2 H2O + 4 H(+)(out). In terms of biological role, component of the cytochrome c oxidase, the last enzyme in the mitochondrial electron transport chain which drives oxidative phosphorylation. The respiratory chain contains 3 multisubunit complexes succinate dehydrogenase (complex II, CII), ubiquinol-cytochrome c oxidoreductase (cytochrome b-c1 complex, complex III, CIII) and cytochrome c oxidase (complex IV, CIV), that cooperate to transfer electrons derived from NADH and succinate to molecular oxygen, creating an electrochemical gradient over the inner membrane that drives transmembrane transport and the ATP synthase. Cytochrome c oxidase is the component of the respiratory chain that catalyzes the reduction of oxygen to water. Electrons originating from reduced cytochrome c in the intermembrane space (IMS) are transferred via the dinuclear copper A center (CU(A)) of subunit 2 and heme A of subunit 1 to the active site in subunit 1, a binuclear center (BNC) formed by heme A3 and copper B (CU(B)). The BNC reduces molecular oxygen to 2 water molecules using 4 electrons from cytochrome c in the IMS and 4 protons from the mitochondrial matrix. The polypeptide is Cytochrome c oxidase subunit 2 (MT-CO2) (Gallus gallus (Chicken)).